The sequence spans 78 residues: MANIKSAIKRAELNVKQNNRNSAQKSAMRSAIKAFEANPNEELFRAASSSIDKAKSKGLIHKNKASRDKARLASKLAK.

The disordered stretch occupies residues 55 to 78; it reads KSKGLIHKNKASRDKARLASKLAK.

Belongs to the bacterial ribosomal protein bS20 family.

Binds directly to 16S ribosomal RNA. This is Small ribosomal subunit protein bS20 from Streptococcus mutans serotype c (strain ATCC 700610 / UA159).